The following is a 122-amino-acid chain: Large ribosomal subunit protein bL12 (122 aa).

This sequence belongs to the bacterial ribosomal protein bL12 family. In terms of assembly, homodimer. Part of the 50S ribosomal subunit; present in 4 copies per ribosome. Forms part of the ribosomal stalk which helps the ribosome interact with GTP-bound translation factors. Forms a pentameric L10(L12)2(L12)2 complex, where L10 forms an elongated spine to which 2 L12 dimers bind in a sequential fashion.

Forms part of the ribosomal stalk which helps the ribosome interact with GTP-bound translation factors. Is thus essential for accurate translation. This is Large ribosomal subunit protein bL12 from Geobacillus stearothermophilus (Bacillus stearothermophilus).